The sequence spans 830 residues: Dimethylglycine oxidase (830 aa).

FAD contacts are provided by residues 14-15 (IV), 35-36 (DQ), 45-48 (STSH), leucine 52, and valine 174. Histidine 48 bears the Pros-8alpha-FAD histidine mark. Active-site residues include histidine 225 and tyrosine 259. FAD contacts are provided by residues tyrosine 259 and 360 to 363 (VWVT). Tyrosine 539 lines the (6S)-5,6,7,8-tetrahydrofolate pocket. Aspartate 552 serves as the catalytic For 5,10-methylenetetrahydrofolate synthesis activity. (6S)-5,6,7,8-tetrahydrofolate-binding positions include threonine 554, glycine 566, and 658 to 660 (ELY).

This sequence belongs to the GcvT family. FAD serves as cofactor.

The catalysed reaction is N,N-dimethylglycine + O2 + H2O = sarcosine + formaldehyde + H2O2. It catalyses the reaction N,N-dimethylglycine + (6S)-5,6,7,8-tetrahydrofolate + O2 = sarcosine + (6R)-5,10-methylene-5,6,7,8-tetrahydrofolate + H2O2. Its function is as follows. Catalyzes the oxidative demethylation of N,N-dimethylglycine to yield sarcosine, formaldehyde and hydrogen peroxide. The oxidation of dimethylglycine is coupled to the synthesis of 5,10-methylenetetrahydrofolate through an unusual substrate channeling mechanism. This channeling occurs by nonbiased diffusion of the iminium intermediate through a large solvent cavity connecting active site 1 (N-terminus) and active site 2 (C-terminus). The synthesis of 5,10-methylenetetrahydrofolate (at active site 2) prevents the accumulation of formaldehyde, formed by hydrolysis of the iminium intermediate product (at active site 1). Does not oxidize sarcosine. In Arthrobacter globiformis, this protein is Dimethylglycine oxidase (dmg).